The sequence spans 130 residues: Large ribosomal subunit protein bL17 (130 aa).

Belongs to the bacterial ribosomal protein bL17 family. As to quaternary structure, part of the 50S ribosomal subunit. Contacts protein L32.

This is Large ribosomal subunit protein bL17 from Nitrosomonas eutropha (strain DSM 101675 / C91 / Nm57).